The sequence spans 418 residues: MSDSPAPLADPHLVYDPVAGDGPKDVVVLGSTGSIGTQAIDLVLRNPDRFRVTALSANGGRVALLAEQAYRLKARTVAVAREDVVPALREALTAQYGTGEPLPEILAGPEAATQLAASDCHTVLNGITGSIGLAPTLAALEAGRTLALANKESLIVGGPLVKALAKPGQIIPVDSEHAALFQALAAGTRADVRKLVVTASGGPFRGRTRDELAAVTVEDALAHPTWAMGPVITINSATLVNKGLEVIEAHLLYDIPFDRIEVVVHPQSYVHSMVEYTDGSTLAHATPPDMGGPIAVGLGWPERVPDAAPAFDWSKASTWEFFPLDNEAFPSVDLARHVGQLAGTAPAVFNAANEECVEAFRSGALPFLGIMETVTRVVEEHGTPRTGTSLTVADVLEAETWARARARQLAAQTAEARA.

NADPH is bound by residues Thr-32, Gly-33, Ser-34, Ile-35, and Asn-150. Lys-151 is a binding site for 1-deoxy-D-xylulose 5-phosphate. An NADPH-binding site is contributed by Glu-152. Asp-174 is a binding site for Mn(2+). 1-deoxy-D-xylulose 5-phosphate is bound by residues Ser-175, Glu-176, Ser-200, and His-223. Residue Glu-176 coordinates Mn(2+). NADPH is bound at residue Gly-229. Residues Ser-236, Asn-241, Lys-242, and Glu-245 each contribute to the 1-deoxy-D-xylulose 5-phosphate site. Position 245 (Glu-245) interacts with Mn(2+).

It belongs to the DXR family. The cofactor is Mg(2+). Requires Mn(2+) as cofactor.

The enzyme catalyses 2-C-methyl-D-erythritol 4-phosphate + NADP(+) = 1-deoxy-D-xylulose 5-phosphate + NADPH + H(+). It participates in isoprenoid biosynthesis; isopentenyl diphosphate biosynthesis via DXP pathway; isopentenyl diphosphate from 1-deoxy-D-xylulose 5-phosphate: step 1/6. Its function is as follows. Catalyzes the NADPH-dependent rearrangement and reduction of 1-deoxy-D-xylulose-5-phosphate (DXP) to 2-C-methyl-D-erythritol 4-phosphate (MEP). This Streptomyces coelicolor (strain ATCC BAA-471 / A3(2) / M145) protein is 1-deoxy-D-xylulose 5-phosphate reductoisomerase.